We begin with the raw amino-acid sequence, 493 residues long: MKKASSQPRAIYYVVALQIWEYFSFYGMRALLILYLTNQLKYDDTHAYALFSAYCSLVYVTPILGGYLADKVLGNRMAVMLGAFLMAVGHLVLGASEIAPTFLYLSLAIIVCGYGLFKSNISCLLGELYQTEDPRRDGGFSLLYAAGNVGSIVAPIACGYVQEEYSWAMGFALAAIGMVAGLIIFLCGNRHFTHTKGVNKAALCARSFILPNWGWLLVLLTIAPLAIAVLFWQEWAVYALIVATAIGLAVLGKIYRQAENQKQRKELGLIVTLTFFSMLFWAFAQQGGSSISLYIDRFVNRHIFGYSVPTAMFQSVNAFAVMLCGVVLAWLIKESIGGNRSVRIWGKFALGLGLMSAGFSILTLSARWSAAYGHSSMPLMIAGLAVMGFAELFIDPVAMSQITRIEIPGVTGVLTGIYMLLSGAIANYLAGVIADRTSQSAFDASGAINYSINAYIDVFSEITWGALACVGLVLLIWLYQSLKFRNRPLAVGS.

13 consecutive transmembrane segments (helical) span residues 14-34, 49-69, 91-111, 138-158, 167-187, 212-232, 235-255, 267-287, 312-332, 344-364, 379-399, 413-433, and 458-478; these read VVAL…LLIL, ALFS…GYLA, LVLG…AIIV, GGFS…PIAC, WAMG…IFLC, NWGW…VLFW, WAVY…GKIY, LGLI…AQQG, MFQS…AWLI, IWGK…ILTL, LMIA…PVAM, VLTG…AGVI, and VFSE…LIWL.

The protein belongs to the major facilitator superfamily. Proton-dependent oligopeptide transporter (POT/PTR) (TC 2.A.17) family. DtpD subfamily.

It localises to the cell inner membrane. Its function is as follows. Probable proton-dependent permease that transports dipeptides. This Citrobacter rodentium (strain ICC168) (Citrobacter freundii biotype 4280) protein is Dipeptide permease D.